A 55-amino-acid polypeptide reads, in one-letter code: Large ribosomal subunit protein bL33 (55 aa).

This sequence belongs to the bacterial ribosomal protein bL33 family.

This is Large ribosomal subunit protein bL33 from Rhizobium meliloti (strain 1021) (Ensifer meliloti).